Reading from the N-terminus, the 108-residue chain is uncharacterized protein (108 aa).

A helical transmembrane segment spans residues 72-94 (LGLHTSVFFFLRIVCMSSAASVF).

It localises to the membrane. This is an uncharacterized protein from Saccharomyces cerevisiae (strain ATCC 204508 / S288c) (Baker's yeast).